The following is a 438-amino-acid chain: Na(+)/H(+) antiporter NhaA (438 aa).

A run of 11 helical transmembrane segments spans residues 23–43 (FGGI…NSFV), 62–82 (FFIG…LFFL), 104–124 (SFPV…YFFL), 133–153 (GFGI…MLLG), 162–182 (VFLI…IALF), 185–205 (TNLK…LALL), 212–232 (SLIP…QSGI), 302–322 (FLAP…NAGV), 337–357 (LGVI…ITFI), 372–392 (WWHI…SMFI), and 410–430 (IAIL…LFLL).

The protein belongs to the NhaA Na(+)/H(+) (TC 2.A.33) antiporter family.

It localises to the cell inner membrane. It carries out the reaction Na(+)(in) + 2 H(+)(out) = Na(+)(out) + 2 H(+)(in). Its function is as follows. Na(+)/H(+) antiporter that extrudes sodium in exchange for external protons. This Helicobacter acinonychis (strain Sheeba) protein is Na(+)/H(+) antiporter NhaA.